We begin with the raw amino-acid sequence, 450 residues long: Serine incorporator 2 (450 aa).

A run of 11 helical transmembrane segments spans residues 5 to 27 (LGACSLLSCASCLCGSAPCILCG), 40 to 57 (LLFTSFLFLGVLVSIIML), 96 to 118 (AVYRMCFATAAFFFFFMLLMICV), 131 to 150 (GFWFFKFLILVGITVGAFYI), 160 to 182 (FYFGVVGSFLFILIQLILFVDFA), 203 to 225 (AGLFFFTFLFYLLSIAAVALMFV), 238 to 257 (VFISLNLTFCVCVSIIAVLP), 264 to 286 (PNSGLLQASVITLYTMFVTWSAL), 315 to 337 (VWWDAPSIVGLVIFILCTFFISL), 380 to 402 (TYSYSFFHFCLVLASLHVMMTLT), and 417 to 439 (WTSVWVKICASWAGLFLYLWTLV).

The protein belongs to the TDE1 family.

It is found in the cell membrane. The catalysed reaction is a 1,2-diacyl-sn-glycero-3-phospho-L-serine(in) = a 1,2-diacyl-sn-glycero-3-phospho-L-serine(out). It carries out the reaction a 1,2-diacyl-sn-glycero-3-phosphocholine(in) = a 1,2-diacyl-sn-glycero-3-phosphocholine(out). It catalyses the reaction a 1,2-diacyl-sn-glycero-3-phosphoethanolamine(in) = a 1,2-diacyl-sn-glycero-3-phosphoethanolamine(out). Functionally, non-ATP-dependent, non-specific lipid transporter for phosphatidylserine, phosphatidylcholine, and phosphatidylethanolamine. Functions as a scramblase that flips lipids in both directions across the membrane. In contrast to SERINC3 and SERINC5, has no effect on gammaretrovirus particles infectivity. The polypeptide is Serine incorporator 2 (Serinc2) (Mus musculus (Mouse)).